A 60-amino-acid chain; its full sequence is MNKLLKLFFITIIIYNNIAFAKETGFYMGAAIGIVEPVVRKFRHKYSNTGIIFQICIAGK.

A signal peptide spans 1-21 (MNKLLKLFFITIIIYNNIAFA).

This is an uncharacterized protein from Rickettsia prowazekii (strain Madrid E).